Here is a 198-residue protein sequence, read N- to C-terminus: Zinc finger protein 41 (198 aa).

A compositionally biased stretch (basic residues) spans 1-12 (MEKPATRKKKSQ). Residues 1–56 (MEKPATRKKKSQAPKEEAGAQKATVKGEKTSKGKKATKKPRKPRRPRKEPVLSPED) form a disordered region. Residues 13–31 (APKEEAGAQKATVKGEKTS) show a composition bias toward basic and acidic residues. Positions 32–47 (KGKKATKKPRKPRRPR) are enriched in basic residues. 4 consecutive C2H2-type zinc fingers follow at residues 87–109 (YECGECGRIFKHKTDHIRHQRVH), 115–137 (FKCDQCGKTFRHSSDVTKHQRIH), 143–165 (FKCGECGKAFNCGSNLLKHQKTH), and 171–193 (YGCEECGKSFAYSSCLIRHRKRH).

This sequence belongs to the krueppel C2H2-type zinc-finger protein family. Predominantly in the spermatocytes and spermatids of testes. It is also expressed in the fetus and embryonic stem cells at lower levels.

The protein resides in the nucleus. A putative DNA-binding regulatory protein associated with meiosis in spermatogenesis. This is Zinc finger protein 41 (Zfp41) from Mus musculus (Mouse).